Consider the following 180-residue polypeptide: Ribulose bisphosphate carboxylase small subunit, chloroplastic 1 (180 aa).

A chloroplast-targeting transit peptide spans 1–56; it reads MASSVISSAAVATRTNVAQASMVAPFNGLKSAVSFPVSSKQNLDITSIASNGGRVQ.

Belongs to the RuBisCO small chain family. In terms of assembly, heterohexadecamer of 8 large and 8 small subunits.

It localises to the plastid. The protein resides in the chloroplast. Functionally, ruBisCO catalyzes two reactions: the carboxylation of D-ribulose 1,5-bisphosphate, the primary event in carbon dioxide fixation, as well as the oxidative fragmentation of the pentose substrate. Both reactions occur simultaneously and in competition at the same active site. Although the small subunit is not catalytic it is essential for maximal activity. In Petunia hybrida (Petunia), this protein is Ribulose bisphosphate carboxylase small subunit, chloroplastic 1.